The primary structure comprises 305 residues: Probable 4-deoxy-4-formamido-L-arabinose-phosphoundecaprenol deformylase ArnD (305 aa).

Residues 7 to 262 (TKVGLRIDVD…QAKENNIEFV (256 aa)) enclose the NodB homology domain.

It belongs to the polysaccharide deacetylase family. ArnD deformylase subfamily.

It catalyses the reaction 4-deoxy-4-formamido-alpha-L-arabinopyranosyl di-trans,octa-cis-undecaprenyl phosphate + H2O = 4-amino-4-deoxy-alpha-L-arabinopyranosyl di-trans,octa-cis-undecaprenyl phosphate + formate. The protein operates within glycolipid biosynthesis; 4-amino-4-deoxy-alpha-L-arabinose undecaprenyl phosphate biosynthesis; 4-amino-4-deoxy-alpha-L-arabinose undecaprenyl phosphate from UDP-4-deoxy-4-formamido-beta-L-arabinose and undecaprenyl phosphate: step 2/2. Its pathway is bacterial outer membrane biogenesis; lipopolysaccharide biosynthesis. Functionally, catalyzes the deformylation of 4-deoxy-4-formamido-L-arabinose-phosphoundecaprenol to 4-amino-4-deoxy-L-arabinose-phosphoundecaprenol. The modified arabinose is attached to lipid A and is required for resistance to polymyxin and cationic antimicrobial peptides. The chain is Probable 4-deoxy-4-formamido-L-arabinose-phosphoundecaprenol deformylase ArnD from Shewanella sediminis (strain HAW-EB3).